The primary structure comprises 285 residues: N(G),N(G)-dimethylarginine dimethylaminohydrolase 1 (285 aa).

Residue A2 is modified to N-acetylalanine. L30 is a substrate binding site. S33 carries the phosphoserine modification. Residues D73, E78, D79, R98, and R145 each coordinate substrate. Residue H173 is the Proton donor of the active site. At C222 the chain carries S-nitrosocysteine. V268 provides a ligand contact to substrate. The residue at position 274 (C274) is an S-nitrosocysteine. C274 (nucleophile) is an active-site residue. C274 contributes to the Zn(2+) binding site.

Belongs to the DDAH family. Monomer. Detected in skeletal muscle, lung, heart, liver, kidney and brain (at protein level).

It carries out the reaction N(omega),N(omega)-dimethyl-L-arginine + H2O = dimethylamine + L-citrulline. The catalysed reaction is N(omega)-methyl-L-arginine + H2O = L-citrulline + methylamine. Inhibited by zinc ions. Its function is as follows. Hydrolyzes N(G),N(G)-dimethyl-L-arginine (ADMA) and N(G)-monomethyl-L-arginine (MMA) which act as inhibitors of NOS. Has therefore a role in the regulation of nitric oxide generation. This chain is N(G),N(G)-dimethylarginine dimethylaminohydrolase 1 (Ddah1), found in Mus musculus (Mouse).